Reading from the N-terminus, the 486-residue chain is NADH dehydrogenase [ubiquinone] flavoprotein 1, mitochondrial (486 aa).

A mitochondrion-targeting transit peptide spans 1–30 (MAPVRGILGLQRAVSIWKESNRLTPALRSF). Low complexity predominate over residues 31-40 (STQAASTSTT). Residues 31–57 (STQAASTSTTPQPPPPPPPPEKTHFGG) are disordered. Positions 41 to 50 (PQPPPPPPPP) are enriched in pro residues. 110–119 (GRGGAGFPSG) contributes to the NADH binding site. 222 to 270 (FGAGAYICGEETALLESLEGKQGKPRLKPPFPANAGLYGCPTTVTNVET) contributes to the FMN binding site. C402, C405, C408, and C448 together coordinate [4Fe-4S] cluster.

The protein belongs to the complex I 51 kDa subunit family. As to quaternary structure, complex I is composed of at least 49 different subunits. This is a component of the flavoprotein-sulfur (FP) fragment of the enzyme. FMN is required as a cofactor. The cofactor is [4Fe-4S] cluster.

It is found in the mitochondrion inner membrane. The catalysed reaction is a ubiquinone + NADH + 5 H(+)(in) = a ubiquinol + NAD(+) + 4 H(+)(out). In terms of biological role, core subunit of the mitochondrial membrane respiratory chain NADH dehydrogenase (Complex I) that is believed to belong to the minimal assembly required for catalysis. Complex I functions in the transfer of electrons from NADH to the respiratory chain. The immediate electron acceptor for the enzyme is believed to be ubiquinone. The sequence is that of NADH dehydrogenase [ubiquinone] flavoprotein 1, mitochondrial from Arabidopsis thaliana (Mouse-ear cress).